A 473-amino-acid polypeptide reads, in one-letter code: uncharacterized protein (473 aa).

Residues 1–86 (MSSSPTESEI…NTSNYGSSRD (86 aa)) are disordered. The segment covering 10-19 (ILPKESHNSI) has biased composition (basic and acidic residues). Composition is skewed to polar residues over residues 20 to 39 (DEQS…NSFN) and 55 to 68 (EPVQ…PNMA). Serine 64 bears the Phosphoserine mark. Over residues 69 to 83 (SNESGNSENTSNYGS) the composition is skewed to low complexity. 3 consecutive RRM domains span residues 95-165 (LWMG…NHLF), 188-260 (IFVG…PIRV), and 305-370 (VFVG…RIRL). The segment at 448 to 473 (MHIPENGNSDTMPVPNTQGKHLSAEE) is disordered. Polar residues predominate over residues 453-467 (NGNSDTMPVPNTQGK).

This is an uncharacterized protein from Schizosaccharomyces pombe (strain 972 / ATCC 24843) (Fission yeast).